Reading from the N-terminus, the 501-residue chain is G protein-activated inward rectifier potassium channel 1 (501 aa).

Residues 1–40 form a disordered region; the sequence is MSALRRKFGDDYQVVTTSSSGSGLQPQGPGQGPQQQLVPK. The Cytoplasmic segment spans residues 1–80; that stretch reads MSALRRKFGD…LFTTLVDLKW (80 aa). Positions 18-37 are enriched in low complexity; that stretch reads SSSGSGLQPQGPGQGPQQQL. A helical membrane pass occupies residues 81–105; sequence RWNLFIFILTYTVAWLFMASMWWVI. Residues 106–129 are Extracellular-facing; sequence AYTRGDLNKAHVGNYTPCVANVYN. The N-linked (GlcNAc...) asparagine glycan is linked to N119. An intramembrane region (helical; Pore-forming) is located at residues 130-141; the sequence is FPSAFLFFIETE. The segment at residues 142–148 is an intramembrane region (pore-forming); the sequence is ATIGYGY. Positions 143 to 148 match the Selectivity filter motif; it reads TIGYGY. The Extracellular segment spans residues 149-157; it reads RYITDKCPE. The helical transmembrane segment at 158 to 179 threads the bilayer; that stretch reads GIILFLFQSILGSIVDAFLIGC. Residues 180 to 501 lie on the Cytoplasmic side of the membrane; the sequence is MFIKMSQPKK…LRKMNSDRFT (322 aa). The segment at 182 to 209 is polyphosphoinositide (PIP2)-binding; sequence IKMSQPKKRAETLMFSEHAVISMRDGKL. Phosphoserine is present on residues S385 and S424.

Belongs to the inward rectifier-type potassium channel (TC 1.A.2.1) family. KCNJ3 subfamily. Associates with KCNJ5/GIRK4 or KCNJ6/GIRK2 or KCNJ9/GIRK3 to form a G-protein activated heteromultimer pore-forming unit. The resulting inward current is much larger.

It localises to the membrane. The catalysed reaction is K(+)(in) = K(+)(out). Heteromultimer composed of KCNJ3/GIRK1 and KCNJ5/GIRK4 is activated by phosphatidylinositol 4,5 biphosphate (PtdIns(4,5)P2). Functionally, inward rectifier potassium channels are characterized by a greater tendency to allow potassium to flow into the cell rather than out of it. Their voltage dependence is regulated by the concentration of extracellular potassium; as external potassium is raised, the voltage range of the channel opening shifts to more positive voltages. The inward rectification is mainly due to the blockage of outward current by internal magnesium. This potassium channel is controlled by G proteins. This receptor plays a crucial role in regulating the heartbeat. In Bos taurus (Bovine), this protein is G protein-activated inward rectifier potassium channel 1 (KCNJ3).